A 90-amino-acid polypeptide reads, in one-letter code: Essential MCU regulator, mitochondrial (90 aa).

A helical membrane pass occupies residues 49-68; sequence GVLKLIFVSASSLYIGGLIA.

The protein belongs to the SMDT1/EMRE family.

The protein localises to the mitochondrion inner membrane. In terms of biological role, essential regulatory subunit of the mitochondrial calcium uniporter (mcu-1) channel, a protein that mediates calcium uptake into mitochondria. The protein is Essential MCU regulator, mitochondrial of Caenorhabditis elegans.